The sequence spans 888 residues: Isoleucine--tRNA ligase (888 aa).

The 'HIGH' region signature appears at 61-71 (PYANGSIHIGH). Residue Glu551 coordinates L-isoleucyl-5'-AMP. The short motif at 592–596 (KMSKQ) is the 'KMSKS' region element. Lys595 lines the ATP pocket. Residues Cys862, Cys865, Cys879, and Cys882 each contribute to the Zn(2+) site.

Belongs to the class-I aminoacyl-tRNA synthetase family. IleS type 1 subfamily. As to quaternary structure, monomer. It depends on Zn(2+) as a cofactor.

The protein resides in the cytoplasm. The enzyme catalyses tRNA(Ile) + L-isoleucine + ATP = L-isoleucyl-tRNA(Ile) + AMP + diphosphate. In terms of biological role, catalyzes the attachment of isoleucine to tRNA(Ile). As IleRS can inadvertently accommodate and process structurally similar amino acids such as valine, to avoid such errors it has two additional distinct tRNA(Ile)-dependent editing activities. One activity is designated as 'pretransfer' editing and involves the hydrolysis of activated Val-AMP. The other activity is designated 'posttransfer' editing and involves deacylation of mischarged Val-tRNA(Ile). The protein is Isoleucine--tRNA ligase of Mycoplasmopsis pulmonis (strain UAB CTIP) (Mycoplasma pulmonis).